The primary structure comprises 322 residues: 4-diphosphocytidyl-2-C-methyl-D-erythritol kinase (322 aa).

Lys25 is a catalytic residue. 110–120 (PVAGGMAGGSA) contacts ATP. The active site involves Asp152.

It belongs to the GHMP kinase family. IspE subfamily.

It catalyses the reaction 4-CDP-2-C-methyl-D-erythritol + ATP = 4-CDP-2-C-methyl-D-erythritol 2-phosphate + ADP + H(+). It functions in the pathway isoprenoid biosynthesis; isopentenyl diphosphate biosynthesis via DXP pathway; isopentenyl diphosphate from 1-deoxy-D-xylulose 5-phosphate: step 3/6. Its function is as follows. Catalyzes the phosphorylation of the position 2 hydroxy group of 4-diphosphocytidyl-2C-methyl-D-erythritol. The polypeptide is 4-diphosphocytidyl-2-C-methyl-D-erythritol kinase (Mycolicibacterium gilvum (strain PYR-GCK) (Mycobacterium gilvum (strain PYR-GCK))).